The sequence spans 201 residues: MATRPSSLVDSLEDEEDPQTLRRERSGSPRPRKIPRNALTQPVDQLLKDLRKNPSMISDPDQRTGREQLSNDELIKKLVTELAENSMIEAEEVRGTLGDISARIEAGFESLSALQVETIQTAQRCDHSDSIRILGENIKILDRSMKTMMETMKLMMEKVDLLYASTAVGTSAPMLPSHPAPPRIYPQLPSAPTADEWDIIP.

A disordered region spans residues 1-70 (MATRPSSLVD…DQRTGREQLS (70 aa)). Short sequence motifs (nuclear localization signal) lie at residues 29–36 (PRPRKIPR) and 181–193 (PPRIYPQLPSAPT).

In terms of assembly, homomultimer; only active in its oligomeric state. Interacts with nucleoprotein/N. Interacts with matrix/M protein. Interacts with host TBK1. Interacts with polymerase L. Interacts with host HMGB1; this interaction is required to stabilize RNP on chromosomes. In terms of processing, phosphorylated by host PKC epsilon and casein kinase II.

Its subcellular location is the host nucleus. It is found in the host cytoplasm. Essential component of the RNA polymerase transcription and replication complex. Acts as a scaffold which brings L in close proximity to the N-RNA complex. Plays a role in the segregation of the viral genome in host daughter cells during mitosis by interacting with host HMGB1, a host chromatin-remodeling DNA architectural protein, thereby stabilizing RNP on chromosomes. Interacts with host TBK1 and thus interferes with activation of cellular antiviral state. Inhibits cellular histone acetyltransferase activities. In Bos taurus (Bovine), this protein is Phosphoprotein (P/X).